The following is a 475-amino-acid chain: Ribulose bisphosphate carboxylase large chain (475 aa).

A propeptide spanning residues 1-2 (MS) is cleaved from the precursor. Position 3 is an N-acetylproline (P3). Positions 123 and 173 each coordinate substrate. K175 (proton acceptor) is an active-site residue. K177 contributes to the substrate binding site. Mg(2+) contacts are provided by K201, D203, and E204. N6-carboxylysine is present on K201. The active-site Proton acceptor is the H294. Residues R295, H327, and S379 each contribute to the substrate site.

This sequence belongs to the RuBisCO large chain family. Type I subfamily. Heterohexadecamer of 8 large chains and 8 small chains; disulfide-linked. The disulfide link is formed within the large subunit homodimers. The cofactor is Mg(2+). Post-translationally, the disulfide bond which can form in the large chain dimeric partners within the hexadecamer appears to be associated with oxidative stress and protein turnover.

The protein localises to the plastid. It localises to the chloroplast. The catalysed reaction is 2 (2R)-3-phosphoglycerate + 2 H(+) = D-ribulose 1,5-bisphosphate + CO2 + H2O. The enzyme catalyses D-ribulose 1,5-bisphosphate + O2 = 2-phosphoglycolate + (2R)-3-phosphoglycerate + 2 H(+). In terms of biological role, ruBisCO catalyzes two reactions: the carboxylation of D-ribulose 1,5-bisphosphate, the primary event in carbon dioxide fixation, as well as the oxidative fragmentation of the pentose substrate in the photorespiration process. Both reactions occur simultaneously and in competition at the same active site. This chain is Ribulose bisphosphate carboxylase large chain, found in Gnetum parvifolium (Small-leaved jointfir).